The primary structure comprises 365 residues: Neuronal migration protein doublecortin (365 aa).

Phosphoserine; by CDK5 is present on S28. A Phosphoserine; by MARK1 and PKA modification is found at S47. 2 Doublecortin domains span residues 53–139 (KKVR…VEYT) and 180–263 (KLVT…AQDD). Y70 carries the phosphotyrosine; by ABL modification. S74 carries the post-translational modification Phosphoserine; by PKC. S90 carries the post-translational modification Phosphoserine; by CK2. At S110 the chain carries Phosphoserine; by PKC. Position 115 is a phosphoserine; by CK2, MARK1 and PKA (S115). S265 bears the Phosphoserine; by CK2 mark. Residues 275-365 (KGNPSATAGP…DDSDSLGDSM (91 aa)) are disordered. S287 is subject to Phosphoserine; by CDK5. T289 is modified (phosphothreonine; by CDK5). The residue at position 294 (S294) is a Phosphoserine; by PKC. Residue S297 is modified to Phosphoserine; by CDK5. At S306 the chain carries Phosphoserine; by CK2. At S306 the chain carries Phosphoserine; by DYRK2. The span at 307–341 (PADSGNDQDANGTSSSQLSTPKSKQSPISTPTSPG) shows a compositional bias: polar residues. The residue at position 326 (T326) is a Phosphothreonine; by CDK5. Position 326 is a phosphothreonine; by PKC and MAPK (T326). S332 bears the Phosphoserine; by CDK5 mark. Phosphoserine; by MAPK is present on S332. At T336 the chain carries Phosphothreonine; by MAPK. S339 is modified (phosphoserine; by CDK5). S339 is subject to Phosphoserine; by MAPK. S342 carries the post-translational modification Phosphoserine; by PKC. Phosphoserine; by CK2 occurs at positions 354 and 360. Residues 356–365 (DDSDSLGDSM) are compositionally biased toward acidic residues.

Interacts with tubulin. Interacts with USP9X. Post-translationally, phosphorylation by MARK1, MARK2 and PKA regulates its ability to bind microtubules. Phosphorylation at Ser-265 and Ser-297 seems to occur only in neonatal brain, the levels falling precipitously by postnatal day 21. In terms of processing, ubiquitinated by MDM2, leading to its degradation by the proteasome. Ubiquitinated by MDM2 and subsequent degradation leads to reduce the dendritic spine density of olfactory bulb granule cells.

It is found in the cytoplasm. The protein localises to the cell projection. It localises to the neuron projection. Its function is as follows. Microtubule-associated protein required for initial steps of neuronal dispersion and cortex lamination during cerebral cortex development. May act by competing with the putative neuronal protein kinase DCLK1 in binding to a target protein. May in that way participate in a signaling pathway that is crucial for neuronal interaction before and during migration, possibly as part of a calcium ion-dependent signal transduction pathway. May participate along with PAFAH1B1/LIS-1 in a distinct overlapping signaling pathway that promotes neuronal migration. In Rattus norvegicus (Rat), this protein is Neuronal migration protein doublecortin (Dcx).